Here is a 429-residue protein sequence, read N- to C-terminus: 3-phosphoshikimate 1-carboxyvinyltransferase (429 aa).

3 residues coordinate 3-phosphoshikimate: K21, S22, and R26. A phosphoenolpyruvate-binding site is contributed by K21. 2 residues coordinate phosphoenolpyruvate: G94 and R122. Residues S167, Q169, D315, and K342 each contribute to the 3-phosphoshikimate site. Q169 is a binding site for phosphoenolpyruvate. Residue D315 is the Proton acceptor of the active site. Phosphoenolpyruvate contacts are provided by R346 and R388.

This sequence belongs to the EPSP synthase family. Monomer.

It is found in the cytoplasm. The catalysed reaction is 3-phosphoshikimate + phosphoenolpyruvate = 5-O-(1-carboxyvinyl)-3-phosphoshikimate + phosphate. It functions in the pathway metabolic intermediate biosynthesis; chorismate biosynthesis; chorismate from D-erythrose 4-phosphate and phosphoenolpyruvate: step 6/7. Its function is as follows. Catalyzes the transfer of the enolpyruvyl moiety of phosphoenolpyruvate (PEP) to the 5-hydroxyl of shikimate-3-phosphate (S3P) to produce enolpyruvyl shikimate-3-phosphate and inorganic phosphate. The protein is 3-phosphoshikimate 1-carboxyvinyltransferase of Desulforamulus reducens (strain ATCC BAA-1160 / DSM 100696 / MI-1) (Desulfotomaculum reducens).